A 129-amino-acid chain; its full sequence is Mini-ribonuclease 3-like protein (129 aa).

Asp-23 is a catalytic residue.

This sequence belongs to the MrnC RNase family.

Might be a ribonuclease involved in RNA processing. The chain is Mini-ribonuclease 3-like protein (mrnCL) from Fusobacterium nucleatum subsp. nucleatum (strain ATCC 25586 / DSM 15643 / BCRC 10681 / CIP 101130 / JCM 8532 / KCTC 2640 / LMG 13131 / VPI 4355).